A 281-amino-acid chain; its full sequence is Transcription factor lfc1 (281 aa).

The segment at residues 60–87 is a DNA-binding region (zn(2)-C6 fungal-type); that stretch reads CLTCRMKKIKCDETKPTCARCTHGQREC.

The protein resides in the nucleus. In terms of biological role, transcription factor that acts as a negative regulator of basidioma development via repressing the expression of genes involved in basidioma development, including hydrophobins such as Hyd-1 and Hyd-8, lectins such as JRL1, as well as the fruiting body differentiation gene FVFD16. This Flammulina velutipes (Agaricus velutipes) protein is Transcription factor lfc1.